The chain runs to 153 residues: Agglutinin (153 aa).

Beta-D-galactosyl-(1-&gt;3)-N-acetyl-D-galactosamine contacts are provided by residues 22-25 (NAWE) and asparagine 46. The region spanning 58 to 153 (GDSAEYLIIN…DNQKWYFDAK (96 aa)) is the Ricin B-type lectin domain.

In terms of assembly, homodimer.

In terms of biological role, lectin that primarily recognizes glycans with a non-reducing terminal N-acetylgalactosamine (GalNAc), with a preference for the alpha- over the beta-anomer. Can also bind non-reducing terminal galactose (Gal) residues but with a lower affinity. Strongly interacts with glycolipid type glycans with terminal non-reducing Gal or GalNAc but fails to bind sialylated or fucosylated forms of the same glycans. Strongly interacts with galactosylated N-glycans, displaying highest affinity for alpha-1-3 branched mono-antennary N-glycans but also binding to multi-antennary glycans. The chain is Agglutinin from Sclerotinia sclerotiorum (strain ATCC 18683 / 1980 / Ss-1) (White mold).